Consider the following 342-residue polypeptide: Ribosomal RNA small subunit methyltransferase C (342 aa).

This sequence belongs to the methyltransferase superfamily. RsmC family. In terms of assembly, monomer.

The protein localises to the cytoplasm. The catalysed reaction is guanosine(1207) in 16S rRNA + S-adenosyl-L-methionine = N(2)-methylguanosine(1207) in 16S rRNA + S-adenosyl-L-homocysteine + H(+). Its function is as follows. Specifically methylates the guanine in position 1207 of 16S rRNA in the 30S particle. The chain is Ribosomal RNA small subunit methyltransferase C from Salmonella typhi.